The chain runs to 166 residues: MRLILLSGLLLLGIFLANGHEQDPDGKVLNSLIDALMDLQREFAKLRGAFLTVYKARSFGNGSERMYVTNKEIKNFEALRQICEQAEGHIPSPQLENQNKAFANVLERHGKEAYLVVGDSANFTNWAAGEPNKAAGACVKADTHGSWHSTSCDDNLLVVCEFYFIL.

Residues 1–19 (MRLILLSGLLLLGIFLANG) form the signal peptide. In terms of domain architecture, C-type lectin spans 46–161 (LRGAFLTVYK…CDDNLLVVCE (116 aa)). N-linked (GlcNAc...) asparagine glycosylation is found at Asn61 and Asn122. 2 cysteine pairs are disulfide-bonded: Cys83–Cys160 and Cys138–Cys152.

The protein belongs to the alpha-type phospholipase A2 inhibitor family. As to quaternary structure, homotrimer; non-covalently linked. As to expression, expressed by the liver.

It localises to the secreted. In terms of biological role, this phospholipase A2 inhibitor binds directly phospholipase A2 in the presence or absence of calcium. This is Phospholipase A2 inhibitor clone 06/08 from Bothrops neuwiedi (Neuwied's lancehead).